Consider the following 95-residue polypeptide: MLKPLGDRVVVRFEEEKEQTVGGFVLAGNHKESTRKATVVAVSETGMRTITGEVVPPSVTVGQMVLVEDGQVLEVTHEDEKLAIIREADIIAILG.

The protein belongs to the GroES chaperonin family. Heptamer of 7 subunits arranged in a ring. Interacts with the chaperonin GroEL.

It is found in the cytoplasm. Functionally, together with the chaperonin GroEL, plays an essential role in assisting protein folding. The GroEL-GroES system forms a nano-cage that allows encapsulation of the non-native substrate proteins and provides a physical environment optimized to promote and accelerate protein folding. GroES binds to the apical surface of the GroEL ring, thereby capping the opening of the GroEL channel. This is Co-chaperonin GroES from Streptococcus uberis (strain ATCC BAA-854 / 0140J).